The following is a 557-amino-acid chain: Formate--tetrahydrofolate ligase (557 aa).

Position 67–74 (67–74 (TPAGEGKS)) interacts with ATP.

Belongs to the formate--tetrahydrofolate ligase family.

It carries out the reaction (6S)-5,6,7,8-tetrahydrofolate + formate + ATP = (6R)-10-formyltetrahydrofolate + ADP + phosphate. Its pathway is one-carbon metabolism; tetrahydrofolate interconversion. This is Formate--tetrahydrofolate ligase from Lacticaseibacillus paracasei (strain ATCC 334 / BCRC 17002 / CCUG 31169 / CIP 107868 / KCTC 3260 / NRRL B-441) (Lactobacillus paracasei).